Consider the following 1668-residue polypeptide: Chitin synthase chs-2 (1668 aa).

Over residues 1–19 (MMNTLDHRPLGRMETMEGK) the composition is skewed to basic and acidic residues. Residues 1 to 51 (MMNTLDHRPLGRMETMEGKPDEDEVPTSSNSDAKGKGYYYSSGTVPTDDST) are disordered. At 1–116 (MMNTLDHRPL…HGFWHDASLQ (116 aa)) the chain is on the cytoplasmic side. The chain crosses the membrane as a helical span at residues 117–137 (VLKLATFLVLFLLTLGSAVVA). Residues 138–176 (KSTFILMTSAIGWGGQTITICNQVISEATQNTVKLKNAH) lie on the Extracellular side of the membrane. The chain crosses the membrane as a helical span at residues 177–197 (VVKWVWATLLALSAPEALCFV). Topologically, residues 198–212 (RSMHRTMFRNVKRPT) are cytoplasmic. A helical membrane pass occupies residues 213–233 (FIQFVFVLIIETFHSIGVGIL). Residues 234–242 (VFRIFPDLD) are Extracellular-facing. A helical membrane pass occupies residues 243 to 263 (AVTAAQLTNAMCFVPAILSVI). Topologically, residues 264-271 (SRKPNKSA) are cytoplasmic. The helical transmembrane segment at 272 to 292 (LLLVIIDFAAIAAQSSGFWAL) threads the bilayer. Topologically, residues 293-301 (PMFLPNLQK) are extracellular. The helical transmembrane segment at 302–322 (HLVAIPVSLTLISLAWWQNFV) threads the bilayer. Over 323–347 (HRDSVFPPVRTLAKFAQRLSERRSK) the chain is Cytoplasmic. Residues 348 to 368 (TYAFVSLWKICIYVVCCFLFI) traverse the membrane as a helical segment. Over 369-487 (SSRMKIEDML…IYSNYVERNQ (119 aa)) the chain is Extracellular. Asparagine 396 carries N-linked (GlcNAc...) asparagine glycosylation. The chain crosses the membrane as a helical span at residues 488–508 (LTMAYDALWLVIFQFGAVFVC). Topologically, residues 509–522 (YHSSKFACKVMMQR) are cytoplasmic. Residues 523–543 (MGFALPMALSVPVTVLLLSTN) traverse the membrane as a helical segment. The Extracellular portion of the chain corresponds to 544 to 576 (CRMRQKDSCYGTNVLTVELFWQCNGASMSLADF). A helical transmembrane segment spans residues 577–597 (ILTPQTWIWLCWLASQFWITI). Over 598–1045 (HLWNPKHERL…ISIWYIIYQL (448 aa)) the chain is Cytoplasmic. A helical transmembrane segment spans residues 1046 to 1066 (VMLISSILGPGTIFVMIIGAI). Residues 1067 to 1074 (SISFSIDT) are Extracellular-facing. The chain crosses the membrane as a helical span at residues 1075–1095 (LISLVIVSIPVVVFIVVCLTA). Topologically, residues 1096–1100 (KPEHQ) are cytoplasmic. Residues 1101–1121 (LICAQTIGAIFAMLMTAVVVG) traverse the membrane as a helical segment. The Extracellular portion of the chain corresponds to 1122-1136 (TSLQLQKDGLLSPHS). A helical transmembrane segment spans residues 1137–1157 (MFTVAVATSFLTAAILHPLEF). Residue threonine 1158 is a topological domain, cytoplasmic. A helical transmembrane segment spans residues 1159–1179 (CIIPGTIYFLAIPCMYMLLPI). The Extracellular portion of the chain corresponds to 1180–1375 (YSVCNMHTVS…RAGLIAIRNS (196 aa)). Residues 1192–1216 (TREDPRPTEKNTLAKKTPGNLESGD) form a disordered region. The stretch at 1280 to 1335 (QIDKCSEADEDEQAEIEDALEMSNQSHAAKKNQKWKQAQSEAWLADKALKRAEREY) forms a coiled coil. N-linked (GlcNAc...) asparagine glycosylation is present at asparagine 1303. A helical transmembrane segment spans residues 1376–1396 (HTVYFLMINIVFIISVLVLQI). Topologically, residues 1397–1440 (HKDCLNIEWPLGPKFNHTVRPCYANHDDNQKEEVWVMTRLQLEP) are cytoplasmic. A helical membrane pass occupies residues 1441–1461 (IGLVFLIFFVSILVIQFLAML). Over 1462-1668 (CHRFGTLAHI…SSGDVELRRF (207 aa)) the chain is Extracellular. The interval 1625-1668 (RLFTAQQDQNSPTSDGNRRKSNSRPWDQPTSSATSSGDVELRRF) is disordered. 2 stretches are compositionally biased toward polar residues: residues 1628–1639 (TAQQDQNSPTSD) and 1647–1661 (SRPW…TSSG).

It belongs to the chitin synthase family. Class IV subfamily.

The protein resides in the cell membrane. It carries out the reaction [(1-&gt;4)-N-acetyl-beta-D-glucosaminyl](n) + UDP-N-acetyl-alpha-D-glucosamine = [(1-&gt;4)-N-acetyl-beta-D-glucosaminyl](n+1) + UDP + H(+). In terms of biological role, may be involved in chitin synthesis in the pharynx during larval development. The polypeptide is Chitin synthase chs-2 (Caenorhabditis elegans).